The following is a 355-amino-acid chain: Green-sensitive opsin-1 (355 aa).

The Extracellular portion of the chain corresponds to 1 to 49 (MAAHADEPVFAARRYNEETTRESAFVYTNANNTRDPFEGPNYHIAPRWV). Residue N31 is glycosylated (N-linked (GlcNAc...) asparagine). A helical transmembrane segment spans residues 50 to 74 (YNLASLWMIIVVIASIFTNSLVIVA). Residues 75–86 (TAKFKKLRHPLN) are Cytoplasmic-facing. Residues 87–112 (WILVNLAIADLGETVLASTISVFNQV) traverse the membrane as a helical segment. The Extracellular portion of the chain corresponds to 113–126 (FGYFVLGHPMCIFE). Cysteines 123 and 200 form a disulfide. Residues 127-146 (GWTVSVCGITALWSLTIISW) traverse the membrane as a helical segment. Residues 147-165 (ERWVVVCKPFGNVKFDGKW) are Cytoplasmic-facing. A helical membrane pass occupies residues 166–189 (AAGGIIFAWTWAIIWCTPPIFGWS). Residues 190–215 (RYWPHGLKTSCGPDVFSGSEDPGVAS) lie on the Extracellular side of the membrane. Residues 216-243 (YMVTLLLTCCILPLSVIIICYIFVWNAI) traverse the membrane as a helical segment. Residues 244 to 265 (HQVAQQQKDSESTQKAEKEVSR) are Cytoplasmic-facing. The chain crosses the membrane as a helical span at residues 266 to 289 (MVVVMILAFILCWGPYASFATFSA). The Extracellular portion of the chain corresponds to 290 to 297 (LNPGYAWH). A helical transmembrane segment spans residues 298–322 (PLAAALPAYFAKSATIYNPIIYVFM). Position 309 is an N6-(retinylidene)lysine (K309). Residues 323–355 (NRQFRSCIMQLFGKKVEDASEVSGSTTEVSTAS) are Cytoplasmic-facing.

Belongs to the G-protein coupled receptor 1 family. Opsin subfamily. As to expression, the color pigments are found in the cone photoreceptor cells.

The protein localises to the membrane. Visual pigments are the light-absorbing molecules that mediate vision. They consist of an apoprotein, opsin, covalently linked to cis-retinal. The chain is Green-sensitive opsin-1 (G103) from Psalidodon fasciatus (Banded astyanax).